The primary structure comprises 323 residues: Prenyl transferase (323 aa).

Positions 46, 49, and 81 each coordinate isopentenyl diphosphate. Mg(2+)-binding residues include D88 and D92. R97 is a binding site for an all-trans-polyprenyl diphosphate. R98 contacts isopentenyl diphosphate. K174, T175, and Q212 together coordinate an all-trans-polyprenyl diphosphate.

The protein belongs to the FPP/GGPP synthase family. The cofactor is Mg(2+).

The protein localises to the plastid. It is found in the chloroplast. Possible role in synthesis of the nonaprenyl side chain of plastoquinone or in synthesis of other prenyl chains such as undekaprenyl pyrophosphate. This is Prenyl transferase (preA) from Porphyra purpurea (Red seaweed).